A 715-amino-acid chain; its full sequence is Fatty acid oxidation complex subunit alpha (715 aa).

The enoyl-CoA hydratase/isomerase stretch occupies residues 1–190 (MIYQGKAITV…KVGAVDAVVA (190 aa)). Residue Asp297 coordinates substrate. Residues 312–715 (KDVKLAAVLG…MAKNGQKFFG (404 aa)) are 3-hydroxyacyl-CoA dehydrogenase. NAD(+)-binding positions include Met325, Asp344, 401 to 403 (VVE), Lys408, and Ser430. Residue His451 is the For 3-hydroxyacyl-CoA dehydrogenase activity of the active site. An NAD(+)-binding site is contributed by Asn454. Residues Asn501 and Tyr660 each contribute to the substrate site.

In the N-terminal section; belongs to the enoyl-CoA hydratase/isomerase family. It in the C-terminal section; belongs to the 3-hydroxyacyl-CoA dehydrogenase family. Heterotetramer of two alpha chains (FadB) and two beta chains (FadA).

The catalysed reaction is a (3S)-3-hydroxyacyl-CoA + NAD(+) = a 3-oxoacyl-CoA + NADH + H(+). It catalyses the reaction a (3S)-3-hydroxyacyl-CoA = a (2E)-enoyl-CoA + H2O. It carries out the reaction a 4-saturated-(3S)-3-hydroxyacyl-CoA = a (3E)-enoyl-CoA + H2O. The enzyme catalyses (3S)-3-hydroxybutanoyl-CoA = (3R)-3-hydroxybutanoyl-CoA. The catalysed reaction is a (3Z)-enoyl-CoA = a 4-saturated (2E)-enoyl-CoA. It catalyses the reaction a (3E)-enoyl-CoA = a 4-saturated (2E)-enoyl-CoA. The protein operates within lipid metabolism; fatty acid beta-oxidation. Its function is as follows. Involved in the aerobic and anaerobic degradation of long-chain fatty acids via beta-oxidation cycle. Catalyzes the formation of 3-oxoacyl-CoA from enoyl-CoA via L-3-hydroxyacyl-CoA. It can also use D-3-hydroxyacyl-CoA and cis-3-enoyl-CoA as substrate. In Pseudomonas aeruginosa (strain LESB58), this protein is Fatty acid oxidation complex subunit alpha.